The primary structure comprises 436 residues: Gamma-glutamyl phosphate reductase (436 aa).

This sequence belongs to the gamma-glutamyl phosphate reductase family.

The protein resides in the cytoplasm. It catalyses the reaction L-glutamate 5-semialdehyde + phosphate + NADP(+) = L-glutamyl 5-phosphate + NADPH + H(+). Its pathway is amino-acid biosynthesis; L-proline biosynthesis; L-glutamate 5-semialdehyde from L-glutamate: step 2/2. Its function is as follows. Catalyzes the NADPH-dependent reduction of L-glutamate 5-phosphate into L-glutamate 5-semialdehyde and phosphate. The product spontaneously undergoes cyclization to form 1-pyrroline-5-carboxylate. The chain is Gamma-glutamyl phosphate reductase from Prochlorococcus marinus (strain SARG / CCMP1375 / SS120).